A 208-amino-acid chain; its full sequence is N-(5'-phosphoribosyl)anthranilate isomerase (208 aa).

The protein belongs to the TrpF family.

It catalyses the reaction N-(5-phospho-beta-D-ribosyl)anthranilate = 1-(2-carboxyphenylamino)-1-deoxy-D-ribulose 5-phosphate. It functions in the pathway amino-acid biosynthesis; L-tryptophan biosynthesis; L-tryptophan from chorismate: step 3/5. This chain is N-(5'-phosphoribosyl)anthranilate isomerase, found in Pyrococcus furiosus (strain ATCC 43587 / DSM 3638 / JCM 8422 / Vc1).